We begin with the raw amino-acid sequence, 874 residues long: Coatomer subunit gamma-1 (874 aa).

A compositionally biased stretch (basic and acidic residues) spans 1-11 (MLKKFDKKDEE). The tract at residues 1-21 (MLKKFDKKDEESGGGSNPFQH) is disordered. HEAT repeat units lie at residues 64–101 (TEAT…IAED), 283–320 (KELA…KHPS), 322–355 (VTAC…GSES), and 356–392 (SIDR…KYPR). Phosphothreonine is present on Thr594. The segment at 609–874 (RQEIFQEQLA…PVDIILASVG (266 aa)) is interaction with ZNF289/ARFGAP2.

The protein belongs to the COPG family. Oligomeric complex that consists of at least the alpha, beta, beta', gamma, delta, epsilon and zeta subunits. Interacts with ZNF289/ARFGAP2 through its C-terminal appendage domain. Interacts with EGFR upon EGF treatment; interaction is essential for regulation of EGF-dependent nuclear transport of EGFR by retrograde trafficking from the Golgi to the ER. The coatomer interacts with KDEL receptors; the interaction is important for retrograde trafficking of KDEL-bearing proteins from the Golgi to the endoplasmic reticulum. Interacts with COPB1. Interacts with TMED10 (via C-terminus). Interacts with TMED2, TMED3, TMED7 and TMED9.

Its subcellular location is the cytoplasm. It localises to the golgi apparatus membrane. It is found in the cytoplasmic vesicle. The protein localises to the COPI-coated vesicle membrane. Its function is as follows. The coatomer is a cytosolic protein complex that binds to dilysine motifs and reversibly associates with Golgi non-clathrin-coated vesicles, which further mediate biosynthetic protein transport from the ER, via the Golgi up to the trans Golgi network. Coatomer complex is required for budding from Golgi membranes, and is essential for the retrograde Golgi-to-ER transport of dilysine-tagged proteins. In mammals, the coatomer can only be recruited by membranes associated to ADP-ribosylation factors (ARFs), which are small GTP-binding proteins; the complex also influences the Golgi structural integrity, as well as the processing, activity, and endocytic recycling of LDL receptors. Required for limiting lipid storage in lipid droplets. Involved in lipid homeostasis by regulating the presence of perilipin family members PLIN2 and PLIN3 at the lipid droplet surface and promoting the association of adipocyte triglyceride lipase (PNPLA2) with the lipid droplet surface to mediate lipolysis. This chain is Coatomer subunit gamma-1 (COPG1), found in Homo sapiens (Human).